The following is a 422-amino-acid chain: Immunoglobulin mu Fc receptor (422 aa).

The N-terminal stretch at 1–16 (MDFWLWLLYFLPVSGA) is a signal peptide. Topologically, residues 18 to 262 (RVLPEVQLNV…DRGLHIPIPE (245 aa)) are extracellular. An Ig-like domain is found at 24-121 (QLNVEWGGSI…GKTQKITLNV (98 aa)). Intrachain disulfides connect Cys37–Cys103 and Cys49–Cys58. Position 91 is a phosphothreonine (Thr91). The chain crosses the membrane as a helical span at residues 263–283 (FHILIPTFLGFLLLVLLGLVV). At 284-422 (KRAIQRRRAS…YAPGPRSSCP (139 aa)) the chain is on the cytoplasmic side. Over residues 290 to 308 (RRASSRRAGRLAMRRRGRG) the composition is skewed to basic residues. Disordered stretches follow at residues 290–367 (RRAS…QVLE) and 391–422 (VNLEDPDSDDYINIPDPSHLPSYAPGPRSSCP). Positions 344-363 (LGPAEAPLLNAPASASPASP) are enriched in low complexity.

As to quaternary structure, interacts (via Ig-like domain) with IGHM (via CH4/Cmu4 domain), both secreted and membrane-bound IgM; the interaction is glycan-independent and multivalent theoretically involving up to eight binding sites for the IgM pentamer. In terms of processing, phosphorylated on both Tyr and Ser residues. O-glycosylated. Sialylated. O-linked glycans regulate trafficking to the plasma membrane. In terms of tissue distribution, expressed in pre-B cells, immature and mature B cells residing in primary and secondary lymphoid organs (at protein level). In the spleen, highly expressed in follicular and marginal zone B cells and at lower levels in germinal center B cells and plasma cells. Expressed in splenic dendritic cells and in granulocytes. In the peritoneum, expressed in B1-a and B-2 cell lineages. In the bone marrow, expressed in immature B cells and at a lower level in pro- and pre-B cells (at protein level). Expressed in M cells (at protein level).

The protein resides in the cell membrane. The protein localises to the early endosome membrane. Its subcellular location is the golgi apparatus. It localises to the trans-Golgi network membrane. It is found in the lysosome membrane. In terms of biological role, high-affinity Fc receptor for immunoglobulin M (IgM), both secreted and membrane-bound IgM. Primarily regulates IgM transport and homeostasis. In lymphoid cells, enables exocytosis of membrane-bound IgM on the plasma membrane as well as endocytosis of IgM-antigen complexes toward lysosomes for degradation. In mucosal epithelium, mediates retrotranscytosis of antigen-IgM complexes across mucosal M cells toward antigen-presenting cells in mucosal lymphoid tissues. Triggers costimulatory signaling and mediates most of IgM effector functions involved in B cell development and primary immune response to infection. Likely limits tonic IgM BCR signaling to self-antigens for proper negative selection of autoreactive B cells in the bone marrow and for the maintenance of regulatory B cell pool in peripheral lymphoid organs. Mediates antibody responses to T cell-dependent and T cell-independent antigens and promotes induction of an efficient neutralizing IgG response. Engages in cross-talk with antigen-receptor signaling via the non-canonical NF-kappa-B, MAP kinases and calcium signaling pathways. This is Immunoglobulin mu Fc receptor from Mus musculus (Mouse).